Here is a 182-residue protein sequence, read N- to C-terminus: uncharacterized protein (182 aa).

The protein resides in the mitochondrion. This is an uncharacterized protein from Schizosaccharomyces pombe (strain 972 / ATCC 24843) (Fission yeast).